The chain runs to 366 residues: tRNA/tmRNA (uracil-C(5))-methyltransferase (366 aa).

S-adenosyl-L-methionine contacts are provided by Gln-189, Tyr-217, Asn-222, Glu-238, and Asp-298. Catalysis depends on Cys-323, which acts as the Nucleophile. Glu-357 (proton acceptor) is an active-site residue.

This sequence belongs to the class I-like SAM-binding methyltransferase superfamily. RNA M5U methyltransferase family. TrmA subfamily.

The enzyme catalyses uridine(54) in tRNA + S-adenosyl-L-methionine = 5-methyluridine(54) in tRNA + S-adenosyl-L-homocysteine + H(+). It catalyses the reaction uridine(341) in tmRNA + S-adenosyl-L-methionine = 5-methyluridine(341) in tmRNA + S-adenosyl-L-homocysteine + H(+). Functionally, dual-specificity methyltransferase that catalyzes the formation of 5-methyluridine at position 54 (m5U54) in all tRNAs, and that of position 341 (m5U341) in tmRNA (transfer-mRNA). In Idiomarina loihiensis (strain ATCC BAA-735 / DSM 15497 / L2-TR), this protein is tRNA/tmRNA (uracil-C(5))-methyltransferase.